The following is a 327-amino-acid chain: Flotillin-like protein FloA (327 aa).

A run of 2 helical transmembrane segments spans residues 6–26 (VLFF…FTFV) and 28–48 (IMLW…TLVG).

The protein belongs to the flotillin-like FloA family. Homooligomerizes.

The protein resides in the cell membrane. It is found in the membrane raft. In terms of biological role, found in functional membrane microdomains (FMM) that may be equivalent to eukaryotic membrane rafts. FMMs are highly dynamic and increase in number as cells age. Flotillins are thought to be important factors in membrane fluidity. The protein is Flotillin-like protein FloA of Priestia megaterium (strain DSM 319 / IMG 1521) (Bacillus megaterium).